A 261-amino-acid polypeptide reads, in one-letter code: Ribosomal RNA small subunit methyltransferase A (261 aa).

Residues asparagine 11, leucine 13, glycine 38, glutamate 59, aspartate 84, and serine 106 each coordinate S-adenosyl-L-methionine.

Belongs to the class I-like SAM-binding methyltransferase superfamily. rRNA adenine N(6)-methyltransferase family. RsmA subfamily.

It localises to the cytoplasm. The catalysed reaction is adenosine(1518)/adenosine(1519) in 16S rRNA + 4 S-adenosyl-L-methionine = N(6)-dimethyladenosine(1518)/N(6)-dimethyladenosine(1519) in 16S rRNA + 4 S-adenosyl-L-homocysteine + 4 H(+). Functionally, specifically dimethylates two adjacent adenosines (A1518 and A1519) in the loop of a conserved hairpin near the 3'-end of 16S rRNA in the 30S particle. May play a critical role in biogenesis of 30S subunits. The chain is Ribosomal RNA small subunit methyltransferase A from Wigglesworthia glossinidia brevipalpis.